Consider the following 281-residue polypeptide: 3-methyl-2-oxobutanoate hydroxymethyltransferase (281 aa).

Residues D44 and D83 each coordinate Mg(2+). Residues 44–45 (DS), D83, and K112 each bind 3-methyl-2-oxobutanoate. E114 provides a ligand contact to Mg(2+). Catalysis depends on E180, which acts as the Proton acceptor. A disordered region spans residues 251–281 (RNGTFPGPEHSSRMDPAELAAALGSQDQATE).

Belongs to the PanB family. In terms of assembly, homodecamer; pentamer of dimers. Mg(2+) serves as cofactor.

Its subcellular location is the cytoplasm. It carries out the reaction 3-methyl-2-oxobutanoate + (6R)-5,10-methylene-5,6,7,8-tetrahydrofolate + H2O = 2-dehydropantoate + (6S)-5,6,7,8-tetrahydrofolate. The protein operates within cofactor biosynthesis; (R)-pantothenate biosynthesis; (R)-pantoate from 3-methyl-2-oxobutanoate: step 1/2. Catalyzes the reversible reaction in which hydroxymethyl group from 5,10-methylenetetrahydrofolate is transferred onto alpha-ketoisovalerate to form ketopantoate. This chain is 3-methyl-2-oxobutanoate hydroxymethyltransferase, found in Chloroflexus aurantiacus (strain ATCC 29364 / DSM 637 / Y-400-fl).